Consider the following 210-residue polypeptide: MGLCSRYKSLTCNSCSMHCQIMPEESPRLQYCANSCFCMWPEESSYFNRGVVEGILTKNHNARLSGYIFVDFSVSFLRLFLEKDWIDYLASTDMGIVLVSDRNMQSLANYWRKHNSAISAVIYNDDGLDVANEKIRQLFIGRYLSFTGGNTLTQMEFTIMGYMVSGYNPYQIAEVLDMDIRSIYAYKQRIEKRMGGKINELFIRSHSVQH.

This sequence to E.coli YkgK.

This is an uncharacterized protein from Escherichia coli (strain K12).